A 1454-amino-acid chain; its full sequence is Beta-1,3-glucan-binding protein (1454 aa).

Positions 1–197 (MSFDLTTPFD…KRSLEMRMMN (197 aa)) are excised as a propeptide. N-linked (GlcNAc...) asparagine glycans are attached at residues N33, N55, N185, N571, N592, N825, N882, and N1153.

Belongs to the glycosyl hydrolase 16 family. Monomer. In terms of tissue distribution, expressed in the hepatopancreas and secreted into the hemolymph. Expressed at lower levels in muscle, pleopod and gill tissue.

It is found in the secreted. Its function is as follows. Involved in the recognition of invading microorganisms. Binds specifically to beta-1,3-glucan and activates the prophenoloxidase cascade. This chain is Beta-1,3-glucan-binding protein, found in Penaeus vannamei (Whiteleg shrimp).